The primary structure comprises 330 residues: Phosphate acyltransferase (330 aa).

Belongs to the PlsX family. Homodimer. Probably interacts with PlsY.

It localises to the cytoplasm. The catalysed reaction is a fatty acyl-[ACP] + phosphate = an acyl phosphate + holo-[ACP]. Its pathway is lipid metabolism; phospholipid metabolism. Catalyzes the reversible formation of acyl-phosphate (acyl-PO(4)) from acyl-[acyl-carrier-protein] (acyl-ACP). This enzyme utilizes acyl-ACP as fatty acyl donor, but not acyl-CoA. The protein is Phosphate acyltransferase of Carboxydothermus hydrogenoformans (strain ATCC BAA-161 / DSM 6008 / Z-2901).